A 452-amino-acid chain; its full sequence is Interferon-induced protein 44-like (452 aa).

The 159-residue stretch at 1 to 159 (MEVTTRLTWN…YLECEVFRVE (159 aa)) folds into the TLDc domain.

It belongs to the IFI44 family. As to quaternary structure, interacts with FKBP5; this interaction modulates IKBKB and IKBKE kinase activities.

The protein localises to the cytoplasm. Type I interferon-stimulated gene (ISG) that plays a critical role in antiviral and antibacterial activity. During bacterial infection, promotes macrophage differentiation and facilitates inflammatory cytokine secretion. Plays a role in the control of respiratory syncytial virus/RSV infection, reducing the ability of the virus to replicate. Exhibits a low antiviral activity against hepatitis C virus. Also acts as a feedback regulator of IFN responses by negatively regulating IKBKB and IKBKE kinase activities through interaction with FKBP5. The chain is Interferon-induced protein 44-like (IFI44L) from Homo sapiens (Human).